Consider the following 291-residue polypeptide: ATP synthase gamma chain (291 aa).

Belongs to the ATPase gamma chain family. As to quaternary structure, F-type ATPases have 2 components, CF(1) - the catalytic core - and CF(0) - the membrane proton channel. CF(1) has five subunits: alpha(3), beta(3), gamma(1), delta(1), epsilon(1). CF(0) has three main subunits: a, b and c.

Its subcellular location is the cell inner membrane. Functionally, produces ATP from ADP in the presence of a proton gradient across the membrane. The gamma chain is believed to be important in regulating ATPase activity and the flow of protons through the CF(0) complex. This Neisseria meningitidis serogroup A / serotype 4A (strain DSM 15465 / Z2491) protein is ATP synthase gamma chain.